The sequence spans 424 residues: Testican-2 (424 aa).

Residues Met-1–Ala-22 form the signal peptide. Ser-72 is subject to Phosphoserine; by FAM20C. Intrachain disulfides connect Cys-90–Cys-101, Cys-95–Cys-111, Cys-136–Cys-166, Cys-139–Cys-159, and Cys-148–Cys-180. The region spanning Gly-130–Cys-182 is the Kazal-like domain. Asn-225 carries an N-linked (GlcNAc...) asparagine glycan. Residues Lys-310–Cys-376 enclose the Thyroglobulin type-1 domain. 3 disulfide bridges follow: Cys-313-Cys-337, Cys-348-Cys-355, and Cys-357-Cys-376. Ser-383 and Ser-388 each carry an O-linked (Xyl...) (glycosaminoglycan) serine glycan. The tract at residues Gly-387 to Trp-424 is disordered. Residues Trp-392–Trp-424 are compositionally biased toward acidic residues.

In terms of processing, contains chondroitin sulfate and heparan sulfate O-linked oligosaccharides. Highly expressed in brain. Also found in lung and testis.

Its subcellular location is the secreted. It localises to the extracellular space. It is found in the extracellular matrix. Its function is as follows. May participate in diverse steps of neurogenesis. Binds calcium. The sequence is that of Testican-2 (SPOCK2) from Homo sapiens (Human).